A 90-amino-acid polypeptide reads, in one-letter code: Small ribosomal subunit protein uS15 (90 aa).

The protein belongs to the universal ribosomal protein uS15 family. In terms of assembly, part of the 30S ribosomal subunit. Forms a bridge to the 50S subunit in the 70S ribosome, contacting the 23S rRNA.

In terms of biological role, one of the primary rRNA binding proteins, it binds directly to 16S rRNA where it helps nucleate assembly of the platform of the 30S subunit by binding and bridging several RNA helices of the 16S rRNA. Its function is as follows. Forms an intersubunit bridge (bridge B4) with the 23S rRNA of the 50S subunit in the ribosome. This chain is Small ribosomal subunit protein uS15, found in Blochmanniella floridana.